A 224-amino-acid polypeptide reads, in one-letter code: Small ribosomal subunit protein uS3 (224 aa).

The KH type-2 domain maps to 39-107 (IREFLKKKPS…DVWVEIAEVK (69 aa)).

Belongs to the universal ribosomal protein uS3 family. As to quaternary structure, part of the 30S ribosomal subunit. Forms a tight complex with proteins S10 and S14.

Functionally, binds the lower part of the 30S subunit head. Binds mRNA in the 70S ribosome, positioning it for translation. The sequence is that of Small ribosomal subunit protein uS3 from Chlamydia trachomatis serovar D (strain ATCC VR-885 / DSM 19411 / UW-3/Cx).